Here is a 1398-residue protein sequence, read N- to C-terminus: Protein timeless (1398 aa).

The necessary for normal circadian rhythm stretch occupies residues 237–268 (VSTLQKLLSLWFEASLSESSEDNESNTSPPKQ). Disordered stretches follow at residues 254–300 (ESSE…GGMR), 322–452 (ARVP…QKFN), 478–555 (TKGK…LRRK), 1127–1147 (TASSPSRYHHTGPRNSLSSVS), and 1220–1239 (NHRTGPSGDPSDCIGSSSTT). Residues 273–290 (SSPMLTSDPTSDSSDNGS) show a composition bias toward low complexity. Residues 291 to 300 (NGRGMGGGMR) are compositionally biased toward gly residues. A compositionally biased stretch (polar residues) spans 338-355 (MTGNDSEQPGSPEQSQPA). The span at 365-375 (EDQRHRQLNEH) shows a compositional bias: basic and acidic residues. Acidic residues predominate over residues 376–390 (GEEDEDEDEVEEEEY). Composition is skewed to polar residues over residues 400-421 (LNLTQQPADKVNNTTNPTSSAP), 440-452 (ASTSAHAQMQKFN), and 504-515 (QVENQESISTSS). A compositionally biased stretch (low complexity) spans 522–531 (QGKPQHQKPP). A Nuclear localization signal motif is present at residues 550 to 560 (KELRRKKLVKR).

This sequence belongs to the timeless family. As to quaternary structure, forms a heterodimer with period (PER); the complex then translocates into the nucleus. Phosphorylated with a circadian rhythmicity. In terms of tissue distribution, expressed in head, photoreceptors, lateral neurons and glial cells in the lamina and medulla of the optic lobes. Expression follows a light-dark cycle, levels show a significant decrease at the end of the night and then remain low throughout the light period (at protein level).

The protein localises to the nucleus. It is found in the cytoplasm. It localises to the perinuclear region. Its function is as follows. Required for the production of circadian rhythms. The biological cycle depends on the rhythmic formation and nuclear localization of the TIM-PER complex. Light induces the degradation of TIM, which promotes elimination of PER. Nuclear activity of the heterodimer coordinatively regulates PER and TIM transcription through a negative feedback loop. Behaves as a negative element in circadian transcriptional loop. Does not appear to bind DNA, suggesting indirect transcriptional inhibition. This chain is Protein timeless (tim), found in Drosophila melanogaster (Fruit fly).